The primary structure comprises 370 residues: Anhydro-N-acetylmuramic acid kinase (370 aa).

Residue 13-20 coordinates ATP; sequence GTSLDGVD.

It belongs to the anhydro-N-acetylmuramic acid kinase family.

It carries out the reaction 1,6-anhydro-N-acetyl-beta-muramate + ATP + H2O = N-acetyl-D-muramate 6-phosphate + ADP + H(+). It functions in the pathway amino-sugar metabolism; 1,6-anhydro-N-acetylmuramate degradation. Its pathway is cell wall biogenesis; peptidoglycan recycling. Catalyzes the specific phosphorylation of 1,6-anhydro-N-acetylmuramic acid (anhMurNAc) with the simultaneous cleavage of the 1,6-anhydro ring, generating MurNAc-6-P. Is required for the utilization of anhMurNAc either imported from the medium or derived from its own cell wall murein, and thus plays a role in cell wall recycling. This chain is Anhydro-N-acetylmuramic acid kinase, found in Vibrio cholerae serotype O1 (strain ATCC 39315 / El Tor Inaba N16961).